A 114-amino-acid chain; its full sequence is Hydrogenase maturation factor HypA (114 aa).

A Ni(2+)-binding site is contributed by His-2. Zn(2+)-binding residues include Cys-73, Cys-76, Cys-89, and Cys-92.

Belongs to the HypA/HybF family.

Functionally, involved in the maturation of [NiFe] hydrogenases. Required for nickel insertion into the metal center of the hydrogenase. The sequence is that of Hydrogenase maturation factor HypA from Psychromonas ingrahamii (strain DSM 17664 / CCUG 51855 / 37).